Here is a 405-residue protein sequence, read N- to C-terminus: Probable tRNA sulfurtransferase (405 aa).

A THUMP domain is found at 60-165 (TAVMDRLKGV…LNGVFLSGQT (106 aa)). Residues 183-184 (ML), 208-209 (HF), R265, G287, and Q296 contribute to the ATP site.

This sequence belongs to the ThiI family.

Its subcellular location is the cytoplasm. It catalyses the reaction [ThiI sulfur-carrier protein]-S-sulfanyl-L-cysteine + a uridine in tRNA + 2 reduced [2Fe-2S]-[ferredoxin] + ATP + H(+) = [ThiI sulfur-carrier protein]-L-cysteine + a 4-thiouridine in tRNA + 2 oxidized [2Fe-2S]-[ferredoxin] + AMP + diphosphate. The catalysed reaction is [ThiS sulfur-carrier protein]-C-terminal Gly-Gly-AMP + S-sulfanyl-L-cysteinyl-[cysteine desulfurase] + AH2 = [ThiS sulfur-carrier protein]-C-terminal-Gly-aminoethanethioate + L-cysteinyl-[cysteine desulfurase] + A + AMP + 2 H(+). Its pathway is cofactor biosynthesis; thiamine diphosphate biosynthesis. Functionally, catalyzes the ATP-dependent transfer of a sulfur to tRNA to produce 4-thiouridine in position 8 of tRNAs, which functions as a near-UV photosensor. Also catalyzes the transfer of sulfur to the sulfur carrier protein ThiS, forming ThiS-thiocarboxylate. This is a step in the synthesis of thiazole, in the thiamine biosynthesis pathway. The sulfur is donated as persulfide by IscS. The chain is Probable tRNA sulfurtransferase from Levilactobacillus brevis (strain ATCC 367 / BCRC 12310 / CIP 105137 / JCM 1170 / LMG 11437 / NCIMB 947 / NCTC 947) (Lactobacillus brevis).